Here is a 315-residue protein sequence, read N- to C-terminus: Eukaryotic translation initiation factor 2 subunit 1 (315 aa).

The region spanning 17 to 88 is the S1 motif domain; the sequence is EDVVMVNVRS…EKGYIDLSKR (72 aa). Serine 49 carries the post-translational modification Phosphoserine; by HRI. Position 52 is a phosphoserine (serine 52). Lysine 141 is modified (N6-acetyllysine). At serine 158 the chain carries Phosphoserine. Residues threonine 279 and threonine 281 each carry the phosphothreonine modification. Positions 293-315 are disordered; it reads LERENAEVDGDDDAEEMEAKAED. The segment covering 299–308 has biased composition (acidic residues); that stretch reads EVDGDDDAEE.

Belongs to the eIF-2-alpha family. In terms of assembly, eukaryotic translation initiation factor 2 eIF2 is a heterotrimeric complex composed of an alpha (EIF2S1), a beta (EIF2S2) and a gamma (EIF2S3) chain. eIF2 is member of the 43S pre-initiation complex (43S PIC). eIF2 forms a complex with at least CELF1/CUGBP1, CALR, CALR3, EIF2S1, EIF2S2, HSP90B1 and HSPA5. Interaction with METAP2 protects EIF2S1 from inhibitory phosphorylation. Interacts with ABCF1. Associates with ribosomes. Interacts with DDX3X in an RNA-independent manner. Post-translationally, phosphorylation at Ser-49 and Ser-52 stabilizes the eIF-2/GDP/eIF2B complex and prevents GDP/GTP exchange reaction, thus impairing the recycling of eIF-2 between successive rounds of initiation and leading to global inhibition of translation, while concomitantly initiating the preferential translation of integrated stress response (ISR)-specific mRNAs. Substrate for at least 4 kinases: EIF2AK1/HRI, EIF2AK2/PKR, EIF2AK3/PERK and EIF2AK4/GCN2. Phosphorylation on Ser-52 by the EIF2AK4/GCN2 protein kinase occurs in response to amino acid starvation and UV irradiation. Phosphorylation at Ser-52 by the EIF2AK3/PERK protein kinase occurs in response to the unfolded protein response. Phosphorylation at Ser-52 by EIF2AK1/HRI in response to mitochondrial damage promotes relocalization to the mitochondrial surface.

It is found in the cytoplasm. The protein resides in the stress granule. It localises to the cytosol. The protein localises to the mitochondrion. Activity is regulated by phosphorylation at Ser-49 and Ser-52, which stabilizes the eIF2/GDP/eIF2B complex and prevents the eIF2B-mediated exchange of GDP for GTP, thereby preventing the formation of the 43S pre-initiation complex (43S PIC). This results in the global attenuation of 5' cap-dependent protein synthesis and concomitant translation of ISR-specific mRNAs that contain a short upstream open reading frame (uORF) in their 5' UTR, such as ATF4, ATF5, DDIT3/CHOP and PPP1R15A/GADD34. Its function is as follows. Member of the eIF2 complex that functions in the early steps of protein synthesis by forming a ternary complex with GTP and initiator tRNA. This complex binds to a 40S ribosomal subunit, followed by mRNA binding to form a 43S pre-initiation complex. Junction of the 60S ribosomal subunit to form the 80S initiation complex is preceded by hydrolysis of the GTP bound to eIF2 and release of an eIF2-GDP binary complex. In order for eIF2 to recycle and catalyze another round of initiation, the GDP bound to eIF2 must exchange with GTP by way of a reaction catalyzed by eIF2B. EIF2S1/eIF2-alpha is a key component of the integrated stress response (ISR), required for adaptation to various stress: phosphorylation by metabolic-stress sensing protein kinases (EIF2AK1/HRI, EIF2AK2/PKR, EIF2AK3/PERK and EIF2AK4/GCN2) in response to stress converts EIF2S1/eIF2-alpha in a global protein synthesis inhibitor, leading to a attenuation of cap-dependent translation, while concomitantly initiating the preferential translation of ISR-specific mRNAs, such as the transcriptional activators ATF4 and QRICH1, and hence allowing ATF4- and QRICH1-mediated reprogramming. EIF2S1/eIF2-alpha also acts as an activator of mitophagy in response to mitochondrial damage: phosphorylation by EIF2AK1/HRI promotes relocalization to the mitochondrial surface, thereby triggering PRKN-independent mitophagy. This is Eukaryotic translation initiation factor 2 subunit 1 (EIF2S1) from Pongo abelii (Sumatran orangutan).